The sequence spans 361 residues: Transposase A from transposon Tn554 (361 aa).

The region spanning 23-120 (YQLIEPVMKF…VVMSFLDYLS (98 aa)) is the Core-binding (CB) domain. Residues 163-351 (KQIRTLRSKE…SDQDMKNEFN (189 aa)) form the Tyr recombinase domain. Active-site residues include Arg-198, Lys-232, His-302, Arg-305, and His-328. The active-site O-(3'-phospho-DNA)-tyrosine intermediate is the Tyr-338.

The protein belongs to the 'phage' integrase family.

Its function is as follows. One of three proteins encoded by transposon Tn554 required for its transposition. The chain is Transposase A from transposon Tn554 (tnpA1) from Staphylococcus aureus (strain Mu50 / ATCC 700699).